The primary structure comprises 171 residues: Calcium channel flower homolog (171 aa).

Over 1 to 31 (MSGSGAAGAAAGPAPPAQEEGMTWWYRWLCR) the chain is Cytoplasmic. A helical transmembrane segment spans residues 32 to 52 (LAGVLGAVSCAISGLFNCVTI). The Extracellular portion of the chain corresponds to 53-56 (HPLN). The helical transmembrane segment at 57-77 (IAAGVWMIMNAFILLLCEAPF) threads the bilayer. The Cytoplasmic portion of the chain corresponds to 78–101 (CCQFVEFANTVAEKVDRLRSWQKA). The helical transmembrane segment at 102 to 122 (VFYCGMAIVPIVMSLTLTTLL) threads the bilayer. Over 123-124 (GN) the chain is Extracellular. A helical transmembrane segment spans residues 125 to 141 (AIAFATGVLYGLSALGK). Over 142 to 171 (KGDAISYARIQQQRQQADEEKLAETFEGEL) the chain is Cytoplasmic.

This sequence belongs to the calcium channel flower family. Interacts with adaptor protein complex 2 (AP-2). In terms of tissue distribution, expressed in neurons in the brain (at protein level). Expressed in neuroblastoma cell lines (at protein level). Expressed in cytotoxic T-lymphoocytes (at protein level). As to expression, low levels of expression in various tissues including the brain, eye, heart, liver and colon. Expression in the heart is at slightly higher levels than isoform 3. Expressed in skin cells. Very low levels of expression in the brain, liver and eye. Detected at very low levels of expression in skin cells. In terms of tissue distribution, expressed in various tissues, with highest levels of expression in the brain and eye. Expressed in skin cells. Low levels of expression in the liver, colon, heart and spleen. As to expression, barely detected in the brain and liver.

The protein localises to the cell membrane. It localises to the vesicle. Transmembrane protein which mediates synaptic endocytosis and fitness-based cell culling. In response to different stimulus strengths, controls two major modes of synaptic vesicle (SV) retrieval in hippocampal neurons; Clathrin-mediated endocytosis (CME) in response to mild stimulation and activity-dependent bulk endocytosis (ADBE) in response to strong stimulation. In cytotoxic T-lymphoocytes (CTLs) facilitates calcium-dependent endocytosis of cytotoxic granules (CGs) at the immuno synapse. Different isoforms work as fitness fingerprints in 'loser' and 'winner' cells and thereby mediate win/lose decisions as part of the cell competition process. The polypeptide is Calcium channel flower homolog (Cacfd1) (Mus musculus (Mouse)).